A 184-amino-acid polypeptide reads, in one-letter code: Phosphodiesterase YfcE (184 aa).

Asp9, His11, Asp37, Asn73, His105, His127, and His129 together coordinate Mn(2+).

The protein belongs to the metallophosphoesterase superfamily. YfcE family. Mn(2+) serves as cofactor.

In terms of biological role, shows phosphodiesterase activity. This Escherichia coli O157:H7 protein is Phosphodiesterase YfcE (yfcE).